The following is a 153-amino-acid chain: Small ribosomal subunit protein bS6 (153 aa).

The disordered stretch occupies residues 97 to 153 (EEGPSAMMRKADRDRERDDRGGGFRGERDGGGFRGDRGDRGDRGPRRPRDEETADEE). Residues 105–147 (RKADRDRERDDRGGGFRGERDGGGFRGDRGDRGDRGPRRPRDE) show a composition bias toward basic and acidic residues.

Belongs to the bacterial ribosomal protein bS6 family.

Its function is as follows. Binds together with bS18 to 16S ribosomal RNA. The chain is Small ribosomal subunit protein bS6 from Bradyrhizobium sp. (strain BTAi1 / ATCC BAA-1182).